The primary structure comprises 169 residues: Podoplanin (169 aa).

An N-terminal signal peptide occupies residues 1-22; sequence MWRVPVLLLVLGGAGLRVPAAG. The Extracellular segment spans residues 23-138; sequence ASTVRPDDII…EKDGLATVTL (116 aa). Thr25 carries O-linked (GalNAc...) threonine glycosylation. The disordered stretch occupies residues 37–69; the sequence is DSVVTPGTEDSVVTPGAEDNVVTDGATEEPYES. Ser38 carries O-linked (GalNAc...) serine glycosylation. 2 O-linked (GalNAc...) threonine glycosylation sites follow: Thr41 and Thr44. O-linked (GalNAc...) serine glycosylation is present at Ser47. O-linked (GalNAc...) threonine glycosylation is found at Thr50, Thr59, Thr63, Thr72, Thr76, Thr79, Thr83, Thr92, Thr96, Thr106, Thr107, Thr108, Thr113, Thr126, and Thr127. The helical transmembrane segment at 139–159 threads the bilayer; it reads VGIIVGVLLAIGFIGGIIIVV. Residues 140-144 form a requires for dimerization and lipid rafts association region; sequence GIIVG. Over 160–169 the chain is Cytoplasmic; the sequence is ARKMSGRYSP. Residues 161 to 162 are requires for interaction with MSN and EZR; it reads RK.

It belongs to the podoplanin family. As to quaternary structure, homodimer. Interacts with CLEC1B; the interaction is independent of CLEC1B glycosylation and activates CLEC1B; the interaction is dependent of sialic acid on O-glycans. Interacts with CD9; this interaction is homophilic and attenuates platelet aggregation and pulmonary metastasis induced by PDPN. Interacts with LGALS8; the interaction is glycosylation-dependent; may participate in connection of the lymphatic endothelium to the surrounding extracellular matrix. Interacts with HSPA9. Interacts (via extracellular domain) with CD44; this interaction is required for PDPN-mediated directional migration and regulation of lamellipodia extension/stabilization during cell spreading and migration. Interacts (via cytoplasmic domain) with MSN and EZR; activates RHOA and promotes epithelial-mesenchymal transition. Interacts with CCL21; relocalized PDPN to the basolateral membrane. In terms of processing, extensively O-glycosylated. Contains sialic acid residues. O-glycosylation is necessary for platelet aggregation activity. Disialylated at Thr-59; sialic acid is critical for platelet-aggregating activity and for CLEC1B interaction. Post-translationally, the N-terminus is blocked.

The protein localises to the membrane. It localises to the cell projection. The protein resides in the filopodium membrane. It is found in the lamellipodium membrane. Its subcellular location is the microvillus membrane. The protein localises to the ruffle membrane. It localises to the membrane raft. The protein resides in the apical cell membrane. It is found in the basolateral cell membrane. Its subcellular location is the invadopodium. In terms of biological role, mediates effects on cell migration and adhesion through its different partners. During development plays a role in blood and lymphatic vessels separation by binding CLEC1B, triggering CLEC1B activation in platelets and leading to platelet activation and/or aggregation. Interaction with CD9, on the contrary, attenuates platelet aggregation and pulmonary metastasis induced by PDPN. Mediates effects on cell migration and adhesion through its different partners. Through MSN or EZR interaction promotes epithelial-mesenchymal transition (EMT) leading to ERZ phosphorylation and triggering RHOA activation leading to cell migration increase and invasiveness. Interaction with CD44 promotes directional cell migration in epithelial and tumor cells. In lymph nodes (LNs), controls fibroblastic reticular cells (FRCs) adhesion to the extracellular matrix (ECM) and contraction of the actomyosin by maintaining ERM proteins (EZR; MSN and RDX) and MYL9 activation through association with unknown transmembrane proteins. Engagement of CLEC1B by PDPN promotes FRCs relaxation by blocking lateral membrane interactions leading to reduction of ERM proteins (EZR; MSN and RDX) and MYL9 activation. Through binding with LGALS8 may participate in connection of the lymphatic endothelium to the surrounding extracellular matrix. In keratinocytes, induces changes in cell morphology showing an elongated shape, numerous membrane protrusions, major reorganization of the actin cytoskeleton, increased motility and decreased cell adhesion. Controls invadopodia stability and maturation leading to efficient degradation of the extracellular matrix (ECM) in tumor cells through modulation of RHOC activity in order to activate ROCK1/ROCK2 and LIMK1/LIMK2 and inactivation of CFL1. Required for normal lung cell proliferation and alveolus formation at birth. Does not function as a water channel or as a regulator of aquaporin-type water channels. Does not have any effect on folic acid or amino acid transport. In Canis lupus familiaris (Dog), this protein is Podoplanin (PDPN).